A 235-amino-acid polypeptide reads, in one-letter code: Iron-sulfur cluster co-chaperone protein HscB (235 aa).

A divalent metal cation is bound by residues Cys41, Cys44, Cys58, and Cys61. In terms of domain architecture, J spans Asp72–Leu144.

Belongs to the HscB family. Interacts with ISCU and HSPA9 to form an iron-sulfur transfer complex. Interacts with SDHAF1 (via the first LYR motif); the interaction recruits the iron-sulfur transfer complex composed of HSC20, HSPA9 and ISCU and mediates the incorporation of iron-sulfur clusters into SDHB which also interacts with HSC20. Interacts with the cytoplasmic form of ISCU and with CIA complex member CIAO1 (via LYR motif). In terms of assembly, homodimer. Interacts with ISCU (cytoplasmic form); this interaction stabilizes the (Fe-S) clusters on ISCU. Interacts with the CIA complex member CIAO1 (via LYR motif). Expressed in lung, brain, stomach, spleen, ovary, testis, liver, muscle and heart.

Its subcellular location is the cytoplasm. The protein localises to the mitochondrion. It functions in the pathway cofactor biosynthesis; iron-sulfur cluster biosynthesis. Functionally, acts as a co-chaperone in iron-sulfur cluster assembly in mitochondria. Required for incorporation of iron-sulfur clusters into SDHB, the iron-sulfur protein subunit of succinate dehydrogenase that is involved in complex II of the mitochondrial electron transport chain. Recruited to SDHB by interaction with SDHAF1 which first binds SDHB and then recruits the iron-sulfur transfer complex formed by HSC20, HSPA9 and ISCU through direct binding to HSC20. Plays an essential role in hematopoiesis. Acts as a co-chaperone in iron-sulfur cluster assembly in the cytoplasm. Also mediates complex formation between components of the cytosolic iron-sulfur biogenesis pathway and the CIA targeting complex composed of CIAO1, DIPK1B/FAM69B and MMS19 by binding directly to the scaffold protein ISCU and to CIAO1. This facilitates iron-sulfur cluster insertion into a number of cytoplasmic and nuclear proteins including POLD1, ELP3, DPYD and PPAT. The sequence is that of Iron-sulfur cluster co-chaperone protein HscB from Homo sapiens (Human).